A 447-amino-acid polypeptide reads, in one-letter code: Dihydrolipoyllysine-residue acetyltransferase component of pyruvate dehydrogenase complex (447 aa).

The region spanning Pro2–Ala78 is the Lipoyl-binding domain. Residue Lys43 is modified to N6-lipoyllysine. A disordered region spans residues Gly91–Arg140. Residues Glu108–Ala134 are compositionally biased toward low complexity. The region spanning Phe142–Val179 is the Peripheral subunit-binding (PSBD) domain. Residue His420 is part of the active site.

Belongs to the 2-oxoacid dehydrogenase family. Forms a 24-polypeptide structural core with octahedral symmetry. (R)-lipoate serves as cofactor.

The enzyme catalyses N(6)-[(R)-dihydrolipoyl]-L-lysyl-[protein] + acetyl-CoA = N(6)-[(R)-S(8)-acetyldihydrolipoyl]-L-lysyl-[protein] + CoA. The pyruvate dehydrogenase complex catalyzes the overall conversion of pyruvate to acetyl-CoA and CO(2). It contains multiple copies of three enzymatic components: pyruvate dehydrogenase (E1), dihydrolipoamide acetyltransferase (E2) and lipoamide dehydrogenase (E3). This chain is Dihydrolipoyllysine-residue acetyltransferase component of pyruvate dehydrogenase complex (pdhC), found in Rhizobium meliloti (strain 1021) (Ensifer meliloti).